The sequence spans 219 residues: Formate dehydrogenase 2 subunit beta (cytochrome c-553) (219 aa).

Residues 3–32 (KAFLIDTTRCTACRGCQLACKEWHDLPANV) enclose the 4Fe-4S ferredoxin-type 1 domain. Residues C12, C15, C18, C22, C74, C77, C82, C124, C141, C144, C156, and C160 each contribute to the [4Fe-4S] cluster site. The 4Fe-4S ferredoxin-type 2 domain maps to 132–171 (DPKTKRITKCDMCFDRVSAGMQPICVKTCPTGTMAFGERD).

Heterotrimer of cytochrome c3 FDH2C and formate dehydrogenase FDH2 alpha and beta subunits that forms the FdhABC(3) complex. [4Fe-4S] cluster serves as cofactor.

It is found in the periplasm. Its function is as follows. Beta chain of the formate dehydrogenase (FDH) that catalyzes the reversible two-electron oxidation of formate to carbon dioxide. The beta chain is an electron transfer unit. This is Formate dehydrogenase 2 subunit beta (cytochrome c-553) from Nitratidesulfovibrio vulgaris (strain ATCC 29579 / DSM 644 / CCUG 34227 / NCIMB 8303 / VKM B-1760 / Hildenborough) (Desulfovibrio vulgaris).